A 533-amino-acid chain; its full sequence is MSAQRQFSEDLWDKFESVVKKVDNGKIFTQQLSKFLSKQQQIESAYAKSLVKLCKDKSFAPEVEMGTLRDSFQCYREQLELIGALHEEFSNRLEKLVTIGIDGYLEESRKQRKALIANGEKCTKDLKTAESNESKAKQNYEKLKRKQEEANEDLSKQPPGAKEQKARKTLESATKAADKGDNEYRESVKCLQQNQQKFYHEEMPRILDDLQRFEVERIDKSKDWLMEVITQNELVPPAVIIHNENIKKGIESIDRERDLQNYILVTMSGAQKPPEAQYEPYQSGGGFAIVNSSSNSNLNISRKSGELNGGGSIQNGASIISSPQQPQYQNIDHQTPPQPNIIIQQHQQSNNNNNTNNNSNVMTTPPPPQPQPQQQQLPQPTQLNNPPQPPISLSKNDSSNSINSNSNGEIVRALYDYNATEENEISFKANALIKVVLRDESGWWQGMVIGESDRIGVFPSNFISDSSDSSKKRVDVAGRKCKVLYDYRTDCEGELNIKEGEILTIEYEDEGWFFGSNESNVSARFPSNYVQVI.

Residues 5 to 258 form the F-BAR domain; the sequence is RQFSEDLWDK…GIESIDRERD (254 aa). A coiled-coil region spans residues 76 to 186; the sequence is REQLELIGAL…ADKGDNEYRE (111 aa). Basic and acidic residues-rich tracts occupy residues 126–155 and 162–184; these read LKTAESNESKAKQNYEKLKRKQEEANEDLS and KEQKARKTLESATKAADKGDNEY. Disordered stretches follow at residues 126 to 184 and 301 to 405; these read LKTA…DNEY and SRKS…INSN. Composition is skewed to low complexity over residues 318–327, 340–360, 372–385, and 392–405; these read SIISSPQQPQ, NIIIQQHQQSNNNNNTNNNSN, PQQQQLPQPTQLNN, and SLSKNDSSNSINSN. SH3 domains follow at residues 406–468 and 476–533; these read SNGE…DSSD and VAGR…VQVI.

In Dictyostelium discoideum (Social amoeba), this protein is SH3 and F-BAR domain-containing protein DDB_G0271676.